The sequence spans 435 residues: Citrate synthase (435 aa).

Active-site residues include His311 and Asp370.

It belongs to the citrate synthase family.

It carries out the reaction oxaloacetate + acetyl-CoA + H2O = citrate + CoA + H(+). Its pathway is carbohydrate metabolism; tricarboxylic acid cycle; isocitrate from oxaloacetate: step 1/2. The sequence is that of Citrate synthase (gltA) from Rickettsia bellii (strain RML369-C).